The chain runs to 518 residues: Phosphoacetylglucosamine mutase 1 (518 aa).

Residue Thr49 is modified to Phosphothreonine. The active-site Phosphoserine intermediate is Ser51. Mg(2+) contacts are provided by Ser51, Asp267, Asp269, and Asp271. Ser51 bears the Phosphoserine mark. Residues 360–362, 486–490, and Arg495 contribute to the substrate site; these read EAN and RASGT.

Belongs to the phosphohexose mutase family. Requires Mg(2+) as cofactor.

It is found in the cytoplasm. The protein localises to the nucleus. The enzyme catalyses N-acetyl-alpha-D-glucosamine 1-phosphate = N-acetyl-D-glucosamine 6-phosphate. It functions in the pathway nucleotide-sugar biosynthesis; UDP-N-acetyl-alpha-D-glucosamine biosynthesis; N-acetyl-alpha-D-glucosamine 1-phosphate from alpha-D-glucosamine 6-phosphate (route I): step 2/2. Functionally, catalyzes the conversion of GlcNAc-6-P into GlcNAc-1-P during the synthesis of uridine diphosphate/UDP-GlcNAc, which is a biosynthetic precursor of chitin and also supplies the amino sugars for N-linked oligosaccharides of glycoproteins. This chain is Phosphoacetylglucosamine mutase 1, found in Schizosaccharomyces pombe (strain 972 / ATCC 24843) (Fission yeast).